A 341-amino-acid polypeptide reads, in one-letter code: uncharacterized protein (341 aa).

This is an uncharacterized protein from Mycobacterium bovis (strain ATCC BAA-935 / AF2122/97).